The sequence spans 719 residues: Fusicoccadiene synthase (719 aa).

Residues Met1–Lys334 are fusicocca-2,10(14)-diene synthase. 2 residues coordinate Mg(2+): Asp92 and Asp96. Residues Thr335–Val719 are geranylgeranyl diphosphate synthase. The disordered stretch occupies residues Glu358–Gly404. A compositionally biased stretch (polar residues) spans Asp378–His400. Isopentenyl diphosphate contacts are provided by Lys435, Arg438, and His467. Residues Asp474 and Asp478 each coordinate Mg(2+). Arg483 lines the dimethylallyl diphosphate pocket. Position 484 (Arg484) interacts with isopentenyl diphosphate. Residues Lys561, Thr562, Gln602, Asn609, Lys619, and Lys629 each contribute to the dimethylallyl diphosphate site.

In the N-terminal section; belongs to the terpene synthase family. This sequence in the C-terminal section; belongs to the FPP/GGPP synthase family. As to quaternary structure, hexamer.

It carries out the reaction geranylgeranyl diphosphate = fusicocca-2,10(14)-diene + diphosphate. The catalysed reaction is isopentenyl diphosphate + (2E,6E)-farnesyl diphosphate = (2E,6E,10E)-geranylgeranyl diphosphate + diphosphate. Its pathway is mycotoxin biosynthesis. Functionally, multifunctional diterpene synthase; part of the 2 gene clusters that mediate the biosynthesis of fusicoccins, diterpene glucosides that display phytohormone-like activity and function as potent activators of plasma membrane H(+)-ATPases in plants by modifying 14-3-3 proteins and cause the plant disease constriction canker. The first step in the pathway is performed by the fusicoccadiene synthase PaFS that possesses both prenyl transferase and terpene cyclase activity, converting isopentenyl diphosphate and dimethylallyl diphosphate into geranylgeranyl diphosphate (GGDP) and successively converting GGDP into fusicocca-2,10(14)-diene, a precursor for fusicoccin H. Fusicoccadiene synthase is an allosteric enzyme for GGPP cyclization that generates 64% fusicoccadiene, 9% delta-araneosene, and one additional unidentified diterpene product, when incubated with GGPP. In the absence of isopentenyl diphosphate (IPP), PaFS can also solvolyze the shorter chain geranyl diphosphate (GPP) and farnesyl diphosphate (FPP) as alternative substrates to yield predominantly acyclic products. FPP is converted to farnesol (60.5%), nerolidol (14.0%), and farnesene (14.0%), while GPP is converted to a mixture of geraniol (59.5%) and linalool (35.0%). The second step is the oxidation at the C-8 position by the cytochrome P450 monooxygenase PaP450-2 to yield fusicocca-2,10(14)-diene-8-beta-ol. The cytochrome P450 monooxygenase PaP450-1 then catalyzes the hydroxylation at the C-16 position to produce fusicocca-2,10(14)-diene-8-beta,16-diol. The dioxygenase fc-dox then catalyzes the 16-oxydation of fusicocca-2,10(14)-diene-8-beta,16-diol to yield an aldehyde (8-beta-hydroxyfusicocca-1,10(14)-dien-16-al). The short-chain dehydrogenase/reductase fc-sdr catalyzes the reduction of the aldehyde to yield fusicocca-1,10(14)-diene-8-beta,16-diol. The next step is the hydroxylation at C-9 performed by the cytochrome P450 monooxygenase PaP450-3 that leads to fusicoccin H aglycon which is glycosylated to fusicoccin H by the O-glycosyltransferase PAGT. Hydroxylation at C-12 by the cytochrome P450 monooxygenase PaP450-4 leads then to the production of fusicoccin Q and is followed by methylation by the O-methyltransferase PAMT to yield fusicoccin P. Fusicoccin P is further converted to fusicoccin J via prenylation by the O-glucose prenyltransferase PaPT. Cytochrome P450 monooxygenase PaP450-5 then performs hydroxylation at C-19 to yield dideacetyl-fusicoccin A which is acetylated to 3'-O-deacetyl-fusicoccin A by the O-acetyltransferase PaAT-2. Finally, a another acetylation by the O-acetyltransferase PaAT-1 yields fusicoccin A. The chain is Fusicoccadiene synthase from Phomopsis amygdali (Fusicoccum amygdali).